The sequence spans 920 residues: Anillin-related medial ring protein mid1 (920 aa).

A disordered region spans residues 1–452 (MKEQEFSYRE…LSSEDLRHPS (452 aa)). A phosphoserine mark is found at S15 and S24. T34 carries the phosphothreonine modification. Residues S46 and S62 each carry the phosphoserine modification. The Nuclear export sequence (NES) 1 signature appears at 69–81 (LNVATDLLESLDL). S95 bears the Phosphoserine mark. A compositionally biased stretch (polar residues) spans 461–481 (RTYSNYCENEPNKSSQSLVSS). Residue S531 is modified to Phosphoserine. Residues 538-561 (DLPSQDKSTSYEVPNGTENQSPRP) form a disordered region. Residues 542–561 (QDKSTSYEVPNGTENQSPRP) are compositionally biased toward polar residues. The tract at residues 551–920 (PNGTENQSPR…WLQEYVNFMA (370 aa)) is cryptic lipid-binding C2 domain. A Nuclear localization sequence (NLS) motif is present at residues 681 to 710 (RKFFDKLFNRRKKRKLNKAAAVENSKAKKS). Positions 763 to 773 (LGNLTLTCLYI) match the Nuclear export sequence (NES) 2 motif. The 100-residue stretch at 802–901 (LYNEGYLYRL…WLQVMNSRSF (100 aa)) folds into the PH domain.

In terms of assembly, homodimer. Interacts with blt1 and cdr2. Interacts with gef2. Interacts with plo1 and rng2. Interacts with fhk2 and sep1. Interacts with clp1. In terms of processing, phosphorylated. At the onset of mitosis, becomes hyperphosphorylated, leaves the nucleus, and forms a medial ring. Phosphorylation by plo1 and other kinases may contribute to solubilizing mid1 for export from the nucleus. Phosphorylation by sid2 drives removal from the cortex at the actomyosin contractile ring constriction onset.

It is found in the nucleus. The protein resides in the cytoplasm. It localises to the cell cortex. The protein localises to the cytoskeleton. Scaffold protein that anchors the contractile ring (CR) at the cell equator during cytokinesis. At the onset of mitosis, membrane-bound oligomers of mid1 assemble recruitment platforms for cytokinetic ring components at the medial cortex and stabilize the ring position during its compaction. Recruits dephosphorylated myo2, but also rng2, clp1 and cdc15 to nodes and to place cytokinetic nodes around the cell equator the medial cortex to promote the ring assembly in cooperation with F-actin. Necessary to stabilize the mitotic spindle perpendicular to the axis of cell division. Also recruits the cdr2 kinase to the CR. Its function is as follows. In the nucleus, binds to the promoter regions of M-G1 transcribed genes to negatively regulate their expression. The sequence is that of Anillin-related medial ring protein mid1 from Schizosaccharomyces pombe (strain 972 / ATCC 24843) (Fission yeast).